A 66-amino-acid chain; its full sequence is Photosystem II reaction center protein J (66 aa).

The helical transmembrane segment at leucine 37 to tyrosine 57 threads the bilayer.

The protein belongs to the PsbJ family. In terms of assembly, PSII is composed of 1 copy each of membrane proteins PsbA, PsbB, PsbC, PsbD, PsbE, PsbF, PsbH, PsbI, PsbJ, PsbK, PsbL, PsbM, PsbT, PsbX, PsbY, PsbZ, Psb30/Ycf12, peripheral proteins PsbO, CyanoQ (PsbQ), PsbU, PsbV and a large number of cofactors. It forms dimeric complexes.

The protein resides in the cellular thylakoid membrane. In terms of biological role, one of the components of the core complex of photosystem II (PSII). PSII is a light-driven water:plastoquinone oxidoreductase that uses light energy to abstract electrons from H(2)O, generating O(2) and a proton gradient subsequently used for ATP formation. It consists of a core antenna complex that captures photons, and an electron transfer chain that converts photonic excitation into a charge separation. This chain is Photosystem II reaction center protein J, found in Synechococcus sp. (strain WH7803).